The chain runs to 431 residues: Argininosuccinate lyase (431 aa).

Belongs to the lyase 1 family. Argininosuccinate lyase subfamily.

It localises to the cytoplasm. The catalysed reaction is 2-(N(omega)-L-arginino)succinate = fumarate + L-arginine. Its pathway is amino-acid biosynthesis; L-arginine biosynthesis; L-arginine from L-ornithine and carbamoyl phosphate: step 3/3. This is Argininosuccinate lyase from Xanthomonas campestris pv. campestris (strain ATCC 33913 / DSM 3586 / NCPPB 528 / LMG 568 / P 25).